Here is a 353-residue protein sequence, read N- to C-terminus: DNA polymerase IV (353 aa).

The UmuC domain occupies 6-187 (IIHVDCDCFY…LPVSKLHGVG (182 aa)). Positions 10 and 105 each coordinate Mg(2+). Residue Glu106 is part of the active site.

Belongs to the DNA polymerase type-Y family. As to quaternary structure, monomer. It depends on Mg(2+) as a cofactor.

It localises to the cytoplasm. It carries out the reaction DNA(n) + a 2'-deoxyribonucleoside 5'-triphosphate = DNA(n+1) + diphosphate. Its function is as follows. Poorly processive, error-prone DNA polymerase involved in untargeted mutagenesis. Copies undamaged DNA at stalled replication forks, which arise in vivo from mismatched or misaligned primer ends. These misaligned primers can be extended by PolIV. Exhibits no 3'-5' exonuclease (proofreading) activity. May be involved in translesional synthesis, in conjunction with the beta clamp from PolIII. The sequence is that of DNA polymerase IV from Pseudomonas fluorescens (strain Pf0-1).